Reading from the N-terminus, the 450-residue chain is MVLEMPAARVPAGPDARDVRQALARHVLTDGYDLVLDLEASAGPWLVDAVTGTRYLDLFSFFASAPLGINPSCIVDDPAFVGELAAAAVNKPSNPDVYTVPYAKFVTTFARVLGDPLLPHLFFVDGGALAVENALKAAFDWKAQKLGLDDRAVNRLQVLHLERSFHGRSGYTMSLTNTDPSKTARYPKFDWPRIPAPALEHPLTTHAEANREAERRALEAAEEAFRAADGMIACFLAEPIQGEGGDNHFSAEFLQAMQDLCHRHDALFVLDEVQSGCGLTGTAWAYQQLGLRPDLVAFGKKTQVCGVMGGGRIGEVESNVFAVSSRISSTWGGNLADMVRATRVLETIERTDLLDSVVQRGKYLRDGLEALAERHPGVVTNARGRGLMCAVDLPDTEQRDAVLRRMYTGHQVIALPCGTRGLRFRPPLTVTESELDQGLEALAASLASRG.

Pyridoxal 5'-phosphate-binding residues include G127 and A128. Residues R168 and Q274 each coordinate 2-oxoglutarate. An L-lysine-binding site is contributed by R168. Position 274 (Q274) interacts with pyridoxal 5'-phosphate. The residue at position 300 (K300) is an N6-(pyridoxal phosphate)lysine. A 2-oxoglutarate-binding site is contributed by R423.

The protein belongs to the class-III pyridoxal-phosphate-dependent aminotransferase family. Pyridoxal 5'-phosphate is required as a cofactor.

The enzyme catalyses L-lysine + 2-oxoglutarate = (S)-2-amino-6-oxohexanoate + L-glutamate. It participates in antibiotic biosynthesis; cephamycin C biosynthesis. In terms of biological role, catalyzes the transfer of the terminal amino group of L-lysine to alpha-ketoglutarate to yield L-glutamate and 2-aminoadipate 6-semialdehyde ((S)-2-amino-6-oxohexanoate), which is spontaneously converted to the dehydrated form 1-piperideine 6-carboxylate. This is L-lysine-epsilon aminotransferase from Amycolatopsis lactamdurans (Nocardia lactamdurans).